Here is a 112-residue protein sequence, read N- to C-terminus: ATP synthase subunit c (112 aa).

A run of 2 helical transmembrane segments spans residues 36-56 and 81-101; these read FSVLAAGLGLGVAALGGAIGM and MFIALAMIEAQVIYALVIALI.

It belongs to the ATPase C chain family. In terms of assembly, F-type ATPases have 2 components, F(1) - the catalytic core - and F(0) - the membrane proton channel. F(1) has five subunits: alpha(3), beta(3), gamma(1), delta(1), epsilon(1). F(0) has three main subunits: a(1), b(2) and c(10-14). The alpha and beta chains form an alternating ring which encloses part of the gamma chain. F(1) is attached to F(0) by a central stalk formed by the gamma and epsilon chains, while a peripheral stalk is formed by the delta and b chains.

The protein localises to the cell inner membrane. Its function is as follows. F(1)F(0) ATP synthase produces ATP from ADP in the presence of a proton or sodium gradient. F-type ATPases consist of two structural domains, F(1) containing the extramembraneous catalytic core and F(0) containing the membrane proton channel, linked together by a central stalk and a peripheral stalk. During catalysis, ATP synthesis in the catalytic domain of F(1) is coupled via a rotary mechanism of the central stalk subunits to proton translocation. Functionally, key component of the F(0) channel; it plays a direct role in translocation across the membrane. A homomeric c-ring of between 10-14 subunits forms the central stalk rotor element with the F(1) delta and epsilon subunits. This chain is ATP synthase subunit c, found in Campylobacter jejuni subsp. doylei (strain ATCC BAA-1458 / RM4099 / 269.97).